Here is a 181-residue protein sequence, read N- to C-terminus: Acireductone dioxygenase (181 aa).

4 residues coordinate Fe(2+): His-97, His-99, Glu-103, and His-141. Ni(2+)-binding residues include His-97, His-99, Glu-103, and His-141.

It belongs to the acireductone dioxygenase (ARD) family. Monomer. Requires Fe(2+) as cofactor. Ni(2+) serves as cofactor.

The catalysed reaction is 1,2-dihydroxy-5-(methylsulfanyl)pent-1-en-3-one + O2 = 3-(methylsulfanyl)propanoate + CO + formate + 2 H(+). It carries out the reaction 1,2-dihydroxy-5-(methylsulfanyl)pent-1-en-3-one + O2 = 4-methylsulfanyl-2-oxobutanoate + formate + 2 H(+). The protein operates within amino-acid biosynthesis; L-methionine biosynthesis via salvage pathway; L-methionine from S-methyl-5-thio-alpha-D-ribose 1-phosphate: step 5/6. Its function is as follows. Catalyzes 2 different reactions between oxygen and the acireductone 1,2-dihydroxy-3-keto-5-methylthiopentene (DHK-MTPene) depending upon the metal bound in the active site. Fe-containing acireductone dioxygenase (Fe-ARD) produces formate and 2-keto-4-methylthiobutyrate (KMTB), the alpha-ketoacid precursor of methionine in the methionine recycle pathway. Ni-containing acireductone dioxygenase (Ni-ARD) produces methylthiopropionate, carbon monoxide and formate, and does not lie on the methionine recycle pathway. This chain is Acireductone dioxygenase, found in Stutzerimonas stutzeri (strain A1501) (Pseudomonas stutzeri).